Here is a 389-residue protein sequence, read N- to C-terminus: Succinyl-diaminopimelate desuccinylase (389 aa).

Residue H72 participates in Zn(2+) binding. Residue D74 is part of the active site. A Zn(2+)-binding site is contributed by D105. The active-site Proton acceptor is the E144. Residues E145, E173, and H362 each contribute to the Zn(2+) site.

It belongs to the peptidase M20A family. DapE subfamily. Homodimer. It depends on Zn(2+) as a cofactor. Co(2+) serves as cofactor.

It catalyses the reaction N-succinyl-(2S,6S)-2,6-diaminopimelate + H2O = (2S,6S)-2,6-diaminopimelate + succinate. Its pathway is amino-acid biosynthesis; L-lysine biosynthesis via DAP pathway; LL-2,6-diaminopimelate from (S)-tetrahydrodipicolinate (succinylase route): step 3/3. Catalyzes the hydrolysis of N-succinyl-L,L-diaminopimelic acid (SDAP), forming succinate and LL-2,6-diaminopimelate (DAP), an intermediate involved in the bacterial biosynthesis of lysine and meso-diaminopimelic acid, an essential component of bacterial cell walls. In Rhodopseudomonas palustris (strain HaA2), this protein is Succinyl-diaminopimelate desuccinylase.